A 448-amino-acid chain; its full sequence is tRNA wybutosine-synthesizing protein 2 homolog (448 aa).

S-adenosyl-L-methionine is bound by residues S218, K225, E265, and 293-294 (DN).

This sequence belongs to the class I-like SAM-binding methyltransferase superfamily. TRM5/TYW2 family.

The enzyme catalyses 4-demethylwyosine(37) in tRNA(Phe) + S-adenosyl-L-methionine = 4-demethyl-7-[(3S)-3-amino-3-carboxypropyl]wyosine(37) in tRNA(Phe) + S-methyl-5'-thioadenosine + H(+). Its pathway is tRNA modification; wybutosine-tRNA(Phe) biosynthesis. In terms of biological role, S-adenosyl-L-methionine-dependent transferase that acts as a component of the wybutosine biosynthesis pathway. Wybutosine is a hyper modified guanosine with a tricyclic base found at the 3'-position adjacent to the anticodon of eukaryotic phenylalanine tRNA. Catalyzes the transfer of the alpha-amino-alpha-carboxypropyl (acp) group from S-adenosyl-L-methionine to the C-7 position of 4-demethylwyosine (imG-14) to produce wybutosine-86. This is tRNA wybutosine-synthesizing protein 2 homolog (TRMT12) from Macaca fascicularis (Crab-eating macaque).